A 249-amino-acid chain; its full sequence is Probable proteasome subunit alpha type-2 (249 aa).

This sequence belongs to the peptidase T1A family. The 26S proteasome consists of a 20S proteasome core and two 19S regulatory subunits. The 20S proteasome core is composed of 28 subunits that are arranged in four stacked rings, resulting in a barrel-shaped structure. The two end rings are each formed by seven alpha subunits, and the two central rings are each formed by seven beta subunits. The catalytic chamber with the active sites is on the inside of the barrel.

The protein localises to the cytoplasm. It localises to the nucleus. Functionally, the proteasome is a multicatalytic proteinase complex which is characterized by its ability to cleave peptides with Arg, Phe, Tyr, Leu, and Glu adjacent to the leaving group at neutral or slightly basic pH. The proteasome has an ATP-dependent proteolytic activity. The polypeptide is Probable proteasome subunit alpha type-2 (pca-2) (Neurospora crassa (strain ATCC 24698 / 74-OR23-1A / CBS 708.71 / DSM 1257 / FGSC 987)).